Consider the following 525-residue polypeptide: M-phase inducer phosphatase 1 (525 aa).

Residues 1–42 form a disordered region; it reads MELGPEPPHRRRLLFTCSPTPAPQPTGKVQFGASRAGGLSPV. The short motif at 74–84 is the Phosphodegron element; it reads MGSSESTDSGF. Ser-76 carries the phosphoserine; by CHEK1 modification. 3 positions are modified to phosphoserine; by NEK11: Ser-79, Ser-82, and Ser-88. Position 124 is a phosphoserine; by CHEK1 and CHEK2 (Ser-124). Residues 141–143 carry the KEN box motif; the sequence is KEN. Position 178 is a phosphoserine; by CHEK1 (Ser-178). Residues 260–318 are disordered; the sequence is FDSPSPCSSTSSCSTRAVKRADRSHEESPRGTKRRKSSEASPVKADVPEPTQLPHQSLS. Residues 262–274 are compositionally biased toward low complexity; sequence SPSPCSSTSSCST. A compositionally biased stretch (basic and acidic residues) spans 278–289; sequence KRADRSHEESPR. A phosphoserine; by CHEK1 and CHEK2 mark is found at Ser-283 and Ser-296. A Rhodanese domain is found at 377–483; sequence LIKEFVIIDC…FFLKCQSHCE (107 aa). Cys-432 is an active-site residue. Thr-508 carries the post-translational modification Phosphothreonine; by CHEK1. A phosphoserine; by PLK3 mark is found at Ser-514 and Ser-520.

It belongs to the MPI phosphatase family. In terms of assembly, interacts with CCNB1/cyclin B1. Interacts with YWHAE/14-3-3 epsilon when phosphorylated. Interacts with CUL1 specifically when CUL1 is neddylated and active. Interacts with BTRC/BTRCP1 and FBXW11/BTRCP2. Interactions with CUL1, BTRC and FBXW11 are enhanced upon DNA damage. Interacts with CHEK2; mediates CDC25A phosphorylation and degradation in response to infrared-induced DNA damages. Interacts with HSP90AB1; prevents heat shock-mediated CDC25A degradation and contributes to cell cycle progression. Post-translationally, phosphorylated by CHEK1 on Ser-76, Ser-124, Ser-178, Ser-283, Ser-296 and Thr-508 during checkpoint mediated cell cycle arrest. Also phosphorylated by CHEK2 on Ser-124, Ser-283, and Ser-296 during checkpoint mediated cell cycle arrest. Phosphorylation on Ser-178 and Thr-508 creates binding sites for YWHAE/14-3-3 epsilon which inhibits CDC25A. Phosphorylation on Ser-76, Ser-124, Ser-178, Ser-283 and Ser-296 may also promote ubiquitin-dependent proteolysis of CDC25A by the SCF complex. Phosphorylation of CDC25A at Ser-76 by CHEK1 primes it for subsequent phosphorylation at Ser-79, Ser-82 and Ser-88 by NEK11. Phosphorylation by NEK11 is required for BTRC-mediated polyubiquitination and degradation. Phosphorylation by PIM1 leads to an increase in phosphatase activity. Phosphorylated by PLK3 following DNA damage, leading to promote its ubiquitination and degradation. In terms of processing, ubiquitinated by the anaphase promoting complex/cyclosome (APC/C) ubiquitin ligase complex that contains FZR1/CDH1 during G1 phase leading to its degradation by the proteasome. Ubiquitinated by a SCF complex containing BTRC and FBXW11 during S phase leading to its degradation by the proteasome. Deubiquitination by USP17L2/DUB3 leads to its stabilization.

The catalysed reaction is O-phospho-L-tyrosyl-[protein] + H2O = L-tyrosyl-[protein] + phosphate. Stimulated by B-type cyclins. Stimulated by PIM1-mediated phosphorylation. In terms of biological role, tyrosine protein phosphatase which functions as a dosage-dependent inducer of mitotic progression. Directly dephosphorylates CDK1 and stimulates its kinase activity. Also dephosphorylates CDK2 in complex with cyclin-E, in vitro. The polypeptide is M-phase inducer phosphatase 1 (Cdc25a) (Rattus norvegicus (Rat)).